We begin with the raw amino-acid sequence, 262 residues long: MIDKTAVIHPSSIVEEGAVIGAGVHIGPFCFVGSQVEIGAGTELKSHVVVNGITKIGCDNQIYQFASIGEANQDLKYAGEPTRVEIGDRNRIRESVSIHRGTVQGGGLSKVGSDNLLMINAHIAHDCIIGDRCILANNATLGGHVEIDDFAIIGGMTAIHQFCVIGAHVMVGGCSGVAQDVPPFVIAQGNHATPFGINIEGLKRRGFDKESLHAIRNAYKLLYRSGRTLDEVKPEIAELADQHPAVQAFIDFFARSTRGIIR.

It belongs to the transferase hexapeptide repeat family. LpxA subfamily. Homotrimer.

The protein localises to the cytoplasm. The enzyme catalyses a (3R)-hydroxyacyl-[ACP] + UDP-N-acetyl-alpha-D-glucosamine = a UDP-3-O-[(3R)-3-hydroxyacyl]-N-acetyl-alpha-D-glucosamine + holo-[ACP]. The protein operates within glycolipid biosynthesis; lipid IV(A) biosynthesis; lipid IV(A) from (3R)-3-hydroxytetradecanoyl-[acyl-carrier-protein] and UDP-N-acetyl-alpha-D-glucosamine: step 1/6. Its function is as follows. Involved in the biosynthesis of lipid A, a phosphorylated glycolipid that anchors the lipopolysaccharide to the outer membrane of the cell. The sequence is that of Acyl-[acyl-carrier-protein]--UDP-N-acetylglucosamine O-acyltransferase from Yersinia enterocolitica.